Here is a 161-residue protein sequence, read N- to C-terminus: Allophycocyanin alpha chain (161 aa).

The residue at position 71 (asparagine 71) is an N4-methylasparagine. Cysteine 81 lines the (2R,3E)-phycocyanobilin pocket.

Belongs to the phycobiliprotein family. As to quaternary structure, heterodimer of an alpha and a beta chain. Post-translationally, contains one covalently linked phycocyanobilin chromophore.

The protein resides in the plastid. Its subcellular location is the cyanelle thylakoid membrane. Functionally, light-harvesting photosynthetic bile pigment-protein from the phycobiliprotein complex. Allophycocyanin has a maximum absorption at approximately 650 nanometers. The sequence is that of Allophycocyanin alpha chain (apcA) from Cyanophora paradoxa.